A 149-amino-acid polypeptide reads, in one-letter code: FAD synthase (149 aa).

ATP is bound by residues 10–11 (TF), 15–18 (HPGH), D95, and Y123.

It belongs to the archaeal FAD synthase family. Homodimer. Co(2+) is required as a cofactor.

It catalyses the reaction FMN + ATP + H(+) = FAD + diphosphate. The protein operates within cofactor biosynthesis; FAD biosynthesis; FAD from FMN: step 1/1. Its activity is regulated as follows. Is inhibited by the product PPi. In terms of biological role, catalyzes the transfer of the AMP portion of ATP to flavin mononucleotide (FMN) to produce flavin adenine dinucleotide (FAD) coenzyme. To a lesser extent, is also able to utilize other nucleotides such as CTP and GTP as substrates, producing the modified coenzymes, flavin cytosine dinucleotide (FCD) and flavin guanine dinucleotide (FGD), respectively. Does not catalyze the reverse reaction to produce FMN and ATP from FAD and PPi. Does not function as a glycerol-3-phosphate cytidylyltransferase, as previously annotated in the complete genome. This Methanocaldococcus jannaschii (strain ATCC 43067 / DSM 2661 / JAL-1 / JCM 10045 / NBRC 100440) (Methanococcus jannaschii) protein is FAD synthase (ribL).